A 210-amino-acid chain; its full sequence is Probable septum site-determining protein MinC (210 aa).

The protein belongs to the MinC family. As to quaternary structure, interacts with MinD and FtsZ.

Cell division inhibitor that blocks the formation of polar Z ring septums. Rapidly oscillates between the poles of the cell to destabilize FtsZ filaments that have formed before they mature into polar Z rings. Prevents FtsZ polymerization. This is Probable septum site-determining protein MinC from Thermotoga petrophila (strain ATCC BAA-488 / DSM 13995 / JCM 10881 / RKU-1).